A 305-amino-acid chain; its full sequence is Acetyl-coenzyme A carboxylase carboxyl transferase subunit beta (305 aa).

A CoA carboxyltransferase N-terminal domain is found at 25–293; the sequence is LWVQCPACQQ…LPKVESVASL (269 aa). Zn(2+)-binding residues include Cys-29, Cys-32, Cys-48, and Cys-51. A C4-type zinc finger spans residues 29–51; sequence CPACQQMIFARDLEKNQRVCTHC.

It belongs to the AccD/PCCB family. Acetyl-CoA carboxylase is a heterohexamer composed of biotin carboxyl carrier protein (AccB), biotin carboxylase (AccC) and two subunits each of ACCase subunit alpha (AccA) and ACCase subunit beta (AccD). Zn(2+) serves as cofactor.

It is found in the cytoplasm. The catalysed reaction is N(6)-carboxybiotinyl-L-lysyl-[protein] + acetyl-CoA = N(6)-biotinyl-L-lysyl-[protein] + malonyl-CoA. Its pathway is lipid metabolism; malonyl-CoA biosynthesis; malonyl-CoA from acetyl-CoA: step 1/1. Its function is as follows. Component of the acetyl coenzyme A carboxylase (ACC) complex. Biotin carboxylase (BC) catalyzes the carboxylation of biotin on its carrier protein (BCCP) and then the CO(2) group is transferred by the transcarboxylase to acetyl-CoA to form malonyl-CoA. The protein is Acetyl-coenzyme A carboxylase carboxyl transferase subunit beta of Granulibacter bethesdensis (strain ATCC BAA-1260 / CGDNIH1).